The chain runs to 275 residues: Nitrate import permease protein NrtB (275 aa).

7 helical membrane-spanning segments follow: residues 25 to 45 (VIRP…LCSG), 89 to 109 (VAVG…LIGS), 120 to 140 (IFQV…LAAL), 147 to 167 (AIFV…TVGA), 189 to 209 (FFNI…RIGI), 213 to 233 (WLAI…FFIW), and 238 to 258 (SSLI…GLLL). Positions 82-262 (IFASLTRVAV…IVGLLLDRFI (181 aa)) constitute an ABC transmembrane type-1 domain.

It belongs to the binding-protein-dependent transport system permease family. CysTW subfamily. The complex is composed of two ATP-binding proteins (NrtC and NrtD), two transmembrane proteins (NrtB) and a solute-binding protein (NrtA).

The protein resides in the cell inner membrane. Functionally, part of the ABC transporter complex NrtABCD involved in nitrate uptake. The complex is probably also involved in nitrite transport. Probably responsible for the translocation of the substrate across the membrane. The sequence is that of Nitrate import permease protein NrtB (nrtB) from Synechocystis sp. (strain ATCC 27184 / PCC 6803 / Kazusa).